Reading from the N-terminus, the 176-residue chain is Inner membrane-spanning protein YciB (176 aa).

5 helical membrane-spanning segments follow: residues 23–43, 50–70, 74–94, 119–139, and 150–170; these read MIAA…FLYW, TMQW…IVLG, FIMW…WGSH, LTYM…FVFT, and MFGS…YLST.

Belongs to the YciB family.

The protein localises to the cell inner membrane. Its function is as follows. Plays a role in cell envelope biogenesis, maintenance of cell envelope integrity and membrane homeostasis. The protein is Inner membrane-spanning protein YciB of Neisseria meningitidis serogroup A / serotype 4A (strain DSM 15465 / Z2491).